A 412-amino-acid polypeptide reads, in one-letter code: NADH-quinone oxidoreductase subunit 4 (412 aa).

Belongs to the complex I 49 kDa subunit family. In terms of assembly, NDH-1 is composed of at least 14 different subunits, Nqo1 to Nqo14. The complex has a L-shaped structure, with the hydrophobic arm (subunits Nqo7, Nqo8, Nqo10 to Nqo14) embedded in the inner membrane and the hydrophilic peripheral arm (subunits Nqo1 to Nqo6, Nqo9) protruding into the bacterial cytoplasm. The hydrophilic domain contains all the redox centers.

It is found in the cell inner membrane. It carries out the reaction a quinone + NADH + 5 H(+)(in) = a quinol + NAD(+) + 4 H(+)(out). Functionally, NDH-1 shuttles electrons from NADH, via FMN and iron-sulfur (Fe-S) centers, to quinones in the respiratory chain. The immediate electron acceptor for the enzyme in this species is believed to be ubiquinone. Couples the redox reaction to proton translocation (for every two electrons transferred, four hydrogen ions are translocated across the cytoplasmic membrane), and thus conserves the redox energy in a proton gradient. The protein is NADH-quinone oxidoreductase subunit 4 (nqo4) of Paracoccus denitrificans.